Here is a 460-residue protein sequence, read N- to C-terminus: Inner membrane symporter YicJ (460 aa).

The Periplasmic segment spans residues 1–11 (MKSEVLSVKEK). Transmembrane regions (helical) follow at residues 12–32 (IGYG…MLYM) and 33–53 (MFFY…MFLV). At 54–80 (ARALDAISDPCMGLLADRTRSRWGKFR) the chain is on the periplasmic side. A helical membrane pass occupies residues 81–101 (PWVLFGALPFGIVCVLAYSTP). Residues 102–116 (DLSMNGKMIYAAITY) are Cytoplasmic-facing. The helical transmembrane segment at 117–137 (TLLTLLYTVVNIPYCALGGVI) threads the bilayer. Residues 138-152 (TNDPTQRISLQSWRF) lie on the Periplasmic side of the membrane. A helical membrane pass occupies residues 153–173 (VLATAGGMLSTVLMMPLVNLI). Residues 174–181 (GGDNKPLG) lie on the Cytoplasmic side of the membrane. A helical transmembrane segment spans residues 182–202 (FQGGIAVLSVVAFMMLAFCFF). Residues 203–248 (TTKERVEAPPTTTSMREDLRDIWQNDQWRIVGLLTIFNILAVCVRG) are Periplasmic-facing. A helical transmembrane segment spans residues 249–269 (GAMMYYVTWILGTPEVFVAFL). At 270 to 288 (TTYCVGNLIGSALAKPLTD) the chain is on the cytoplasmic side. Residues 289 to 309 (WKCKVTIFWWTNALLAVISLA) traverse the membrane as a helical segment. Met-310 is a topological domain (periplasmic). A helical membrane pass occupies residues 311–331 (FFVPMQASITMFVFIFVIGVL). The Cytoplasmic portion of the chain corresponds to 332–366 (HQLVTPIQWVMMSDTVDYGEWCNGKRLTGISFAGT). The chain crosses the membrane as a helical span at residues 367-387 (LFVLKLGLAFGGALIGWMLAY). Residues 388–403 (GGYDAAEKAQNSATIS) are Periplasmic-facing. The chain crosses the membrane as a helical span at residues 404 to 424 (IIIALFTIVPAICYLLSAIIA). The Cytoplasmic segment spans residues 425 to 460 (KRYYSLTTHNLKTVMEQLAQGKRRCQQQFTSQEVQN).

It belongs to the sodium:galactoside symporter (TC 2.A.2) family.

The protein localises to the cell inner membrane. This Escherichia coli (strain K12) protein is Inner membrane symporter YicJ (yicJ).